Here is a 724-residue protein sequence, read N- to C-terminus: Membrane protein YdfJ (724 aa).

12 consecutive transmembrane segments (helical) span residues I17–L37, I179–A199, G200–G220, L231–T251, A277–I297, L309–A329, I360–L380, A512–F532, L539–V559, G575–D595, P627–G647, and G655–P675.

This sequence belongs to the resistance-nodulation-cell division (RND) (TC 2.A.6) family. MmpL subfamily.

It localises to the cell membrane. This Bacillus subtilis (strain 168) protein is Membrane protein YdfJ (ydfJ).